A 1450-amino-acid polypeptide reads, in one-letter code: Sister chromatid cohesion protein PDS5 homolog (1450 aa).

Disordered stretches follow at residues 1–145, 680–707, and 1340–1450; these read MATR…KETK, VGGS…QQQQ, and LPPL…EVEN. Residues 45–59 are compositionally biased toward acidic residues; the sequence is DDGELDSDIDEEDES. Positions 77-138 are enriched in low complexity; that stretch reads KTQQQPQKSI…TSSSSQQSTQ (62 aa). Positions 650 to 716 form a coiled coil; it reads KQLFKKYLEE…QLQQPENDIE (67 aa). Over residues 682–691 the composition is skewed to polar residues; that stretch reads GSTTPTSKKS. Low complexity-rich tracts occupy residues 692–707 and 1350–1363; these read QPPQ…QQQQ and NNNN…STNN. Basic and acidic residues predominate over residues 1369 to 1378; that stretch reads DENNNNKNDN. Low complexity predominate over residues 1387-1401; sequence NSTTAVPQKSIISKP. Basic residues predominate over residues 1402 to 1427; it reads PAKKVSKKAAAKQKSPKKKTNKKKKQ. The segment covering 1430–1450 has biased composition (acidic residues); sequence SEEEVSSSEEEDESQDEEVEN.

This sequence belongs to the PDS5 family.

The protein localises to the nucleus. In terms of biological role, may regulate sister chromatid cohesion during mitosis and couple it to DNA replication. The polypeptide is Sister chromatid cohesion protein PDS5 homolog (Dictyostelium discoideum (Social amoeba)).